Reading from the N-terminus, the 671-residue chain is Phospholipid:diacylglycerol acyltransferase 1 (671 aa).

The interval 1–46 (MPLIHRKKPTEKPSTPPSEEVVHDEDSQKKPHESSKSHHKKSNGGG) is disordered. Topologically, residues 1–54 (MPLIHRKKPTEKPSTPPSEEVVHDEDSQKKPHESSKSHHKKSNGGGKWSCIDSC) are cytoplasmic. Positions 20-36 (EVVHDEDSQKKPHESSK) are enriched in basic and acidic residues. The chain crosses the membrane as a helical span at residues 55 to 75 (CWFIGCVCVTWWFLLFLYNAM). Over 76–671 (PASFPQYVTE…EWSERIDLKL (596 aa)) the chain is Lumenal. A glycan (N-linked (GlcNAc...) asparagine) is linked at Asn-161. Ser-254 serves as the catalytic Acyl-ester intermediate. 2 N-linked (GlcNAc...) asparagine glycosylation sites follow: Asn-381 and Asn-434. Active-site charge relay system residues include Asp-573 and His-626. Asn-647 is a glycosylation site (N-linked (GlcNAc...) asparagine).

This sequence belongs to the AB hydrolase superfamily. Lipase family. As to expression, ubiquitous. Highest expression in young developing seeds.

It is found in the membrane. The catalysed reaction is a glycerophospholipid + a 1,2-diacyl-sn-glycerol = a monoacylglycerophospholipid + a triacyl-sn-glycerol. The protein operates within glycerolipid metabolism; triacylglycerol biosynthesis. Its function is as follows. Triacylglycerol formation by an acyl-CoA independent pathway. The enzyme preferentially transfers acyl groups from the sn-2 position of a phospholipid to diacylglycerol, thus forming an sn-1-lysophospholipid. Involved in epoxy and hydroxy fatty acid accumulation in seeds. Has complementary functions with DAG1 that are essential for triacylglycerol synthesis and normal development of both seeds and pollen. The protein is Phospholipid:diacylglycerol acyltransferase 1 (PDAT1) of Arabidopsis thaliana (Mouse-ear cress).